The primary structure comprises 118 residues: Superoxide-generating NADPH oxidase light chain subunit (118 aa).

A run of 4 helical transmembrane segments spans residues 9–29 (WAAM…IMGI), 36–56 (IAIY…PLSF), 62–82 (AIFH…VLCY), and 83–103 (FLVP…VFLI).

This sequence belongs to the p22phox family. As to quaternary structure, composed of a heavy chain and a light chain.

It is found in the cell membrane. Its function is as follows. Critical component of the membrane-bound oxidase of phagocytes that generates superoxide. In Dictyostelium discoideum (Social amoeba), this protein is Superoxide-generating NADPH oxidase light chain subunit (cybA).